Reading from the N-terminus, the 202-residue chain is ATP-dependent Clp protease proteolytic subunit 3 (202 aa).

The Nucleophile role is filled by Ser93. The active site involves His118.

This sequence belongs to the peptidase S14 family. Fourteen ClpP subunits assemble into 2 heptameric rings which stack back to back to give a disk-like structure with a central cavity, resembling the structure of eukaryotic proteasomes.

The protein resides in the cytoplasm. It carries out the reaction Hydrolysis of proteins to small peptides in the presence of ATP and magnesium. alpha-casein is the usual test substrate. In the absence of ATP, only oligopeptides shorter than five residues are hydrolyzed (such as succinyl-Leu-Tyr-|-NHMec, and Leu-Tyr-Leu-|-Tyr-Trp, in which cleavage of the -Tyr-|-Leu- and -Tyr-|-Trp bonds also occurs).. Functionally, cleaves peptides in various proteins in a process that requires ATP hydrolysis. Has a chymotrypsin-like activity. Plays a major role in the degradation of misfolded proteins. The protein is ATP-dependent Clp protease proteolytic subunit 3 of Rhodococcus jostii (strain RHA1).